Here is a 155-residue protein sequence, read N- to C-terminus: SsrA-binding protein (155 aa).

The protein belongs to the SmpB family.

The protein resides in the cytoplasm. Functionally, required for rescue of stalled ribosomes mediated by trans-translation. Binds to transfer-messenger RNA (tmRNA), required for stable association of tmRNA with ribosomes. tmRNA and SmpB together mimic tRNA shape, replacing the anticodon stem-loop with SmpB. tmRNA is encoded by the ssrA gene; the 2 termini fold to resemble tRNA(Ala) and it encodes a 'tag peptide', a short internal open reading frame. During trans-translation Ala-aminoacylated tmRNA acts like a tRNA, entering the A-site of stalled ribosomes, displacing the stalled mRNA. The ribosome then switches to translate the ORF on the tmRNA; the nascent peptide is terminated with the 'tag peptide' encoded by the tmRNA and targeted for degradation. The ribosome is freed to recommence translation, which seems to be the essential function of trans-translation. In Streptococcus pyogenes serotype M18 (strain MGAS8232), this protein is SsrA-binding protein.